A 337-amino-acid polypeptide reads, in one-letter code: tRNA N6-adenosine threonylcarbamoyltransferase (337 aa).

Residues His-111 and His-115 each contribute to the Fe cation site. Residues Leu-134–Gly-138, Asp-167, Gly-180, and Asn-272 contribute to the substrate site. Residue Asp-300 coordinates Fe cation.

Belongs to the KAE1 / TsaD family. The cofactor is Fe(2+).

It is found in the cytoplasm. The enzyme catalyses L-threonylcarbamoyladenylate + adenosine(37) in tRNA = N(6)-L-threonylcarbamoyladenosine(37) in tRNA + AMP + H(+). Functionally, required for the formation of a threonylcarbamoyl group on adenosine at position 37 (t(6)A37) in tRNAs that read codons beginning with adenine. Is involved in the transfer of the threonylcarbamoyl moiety of threonylcarbamoyl-AMP (TC-AMP) to the N6 group of A37, together with TsaE and TsaB. TsaD likely plays a direct catalytic role in this reaction. This chain is tRNA N6-adenosine threonylcarbamoyltransferase, found in Shewanella loihica (strain ATCC BAA-1088 / PV-4).